The sequence spans 394 residues: MSRNTPHIFTSESVGEGHPDKVADYISDSILDACLAQDKTSRVACETLVKSNMVIIAGELTTKAVIDPEKIARQAIREIGYCNRQDDDVFHADTVFFTNLLTEQSPDIAQGVDAREAEGKGHAEQGAGDQGIMFGFATNETPELLPAPIVFAHKLLIELARRRKRGHVDWLRPDCKSQVAVAYDEDGRPAHIENVVISTQHTEDVDHDTIYSYCVKLIKNVLPAELLDERTEYFINPTGKFVVGGPHGDSGLTGRKIIVDTYGGMGRHGGGAFSGKDPSKVDRSAAYMCRWVAKHIVAAGLADKCELQVAYAIGYPAPVSIRVDTFGTGKVEEISIENALENIFSFKPADMVEQLNLLRPIYRKTTHYGHFTNPELPWEQLDETRLASLKQLLH.

ATP is bound at residue H18. D20 is a binding site for Mg(2+). E46 serves as a coordination point for K(+). E59 and Q104 together coordinate L-methionine. The flexible loop stretch occupies residues 104–114 (QSPDIAQGVDA). Residues 174 to 176 (DCK), 240 to 241 (KF), D249, 255 to 256 (RK), A272, and K276 each bind ATP. Residue D249 coordinates L-methionine. An L-methionine-binding site is contributed by K280.

The protein belongs to the AdoMet synthase family. Homotetramer; dimer of dimers. It depends on Mg(2+) as a cofactor. Requires K(+) as cofactor.

The protein resides in the cytoplasm. The enzyme catalyses L-methionine + ATP + H2O = S-adenosyl-L-methionine + phosphate + diphosphate. The protein operates within amino-acid biosynthesis; S-adenosyl-L-methionine biosynthesis; S-adenosyl-L-methionine from L-methionine: step 1/1. Its function is as follows. Catalyzes the formation of S-adenosylmethionine (AdoMet) from methionine and ATP. The overall synthetic reaction is composed of two sequential steps, AdoMet formation and the subsequent tripolyphosphate hydrolysis which occurs prior to release of AdoMet from the enzyme. In Akkermansia muciniphila (strain ATCC BAA-835 / DSM 22959 / JCM 33894 / BCRC 81048 / CCUG 64013 / CIP 107961 / Muc), this protein is S-adenosylmethionine synthase.